The following is a 102-amino-acid chain: Virulence plasmid protein pGP4-D (102 aa).

In Chlamydia trachomatis serovar L2 (strain ATCC VR-902B / DSM 19102 / 434/Bu), this protein is Virulence plasmid protein pGP4-D.